The chain runs to 265 residues: Tryptophan synthase alpha chain (265 aa).

Active-site proton acceptor residues include Glu-49 and Asp-60.

This sequence belongs to the TrpA family. As to quaternary structure, tetramer of two alpha and two beta chains.

The enzyme catalyses (1S,2R)-1-C-(indol-3-yl)glycerol 3-phosphate + L-serine = D-glyceraldehyde 3-phosphate + L-tryptophan + H2O. It functions in the pathway amino-acid biosynthesis; L-tryptophan biosynthesis; L-tryptophan from chorismate: step 5/5. Its function is as follows. The alpha subunit is responsible for the aldol cleavage of indoleglycerol phosphate to indole and glyceraldehyde 3-phosphate. The chain is Tryptophan synthase alpha chain from Desulfatibacillum aliphaticivorans.